Here is a 407-residue protein sequence, read N- to C-terminus: UPF0761 membrane protein AZOSEA40600 (407 aa).

The next 6 helical transmembrane spans lie at 29–49 (SLAFTTLLAIVPLLTVIIALF), 92–112 (GLTLIGTVLLVLTALMLLMTI), 132–152 (LMVHWFALTLGPLALGGSVLA), 174–194 (FARLVPTVLLGSLFSVLYYAV), 207–227 (GGIAAAIVFVLMQRLFGLFIV), and 239–259 (FAVLPIFLVWLYLSWVVILLG).

The protein belongs to the UPF0761 family.

Its subcellular location is the cell inner membrane. This Aromatoleum aromaticum (strain DSM 19018 / LMG 30748 / EbN1) (Azoarcus sp. (strain EbN1)) protein is UPF0761 membrane protein AZOSEA40600.